The sequence spans 292 residues: ATP synthase gamma chain (292 aa).

The protein belongs to the ATPase gamma chain family. As to quaternary structure, F-type ATPases have 2 components, CF(1) - the catalytic core - and CF(0) - the membrane proton channel. CF(1) has five subunits: alpha(3), beta(3), gamma(1), delta(1), epsilon(1). CF(0) has three main subunits: a, b and c.

Its subcellular location is the cell inner membrane. Produces ATP from ADP in the presence of a proton gradient across the membrane. The gamma chain is believed to be important in regulating ATPase activity and the flow of protons through the CF(0) complex. The protein is ATP synthase gamma chain of Nitrobacter hamburgensis (strain DSM 10229 / NCIMB 13809 / X14).